We begin with the raw amino-acid sequence, 512 residues long: Cytochrome P450 1A2 (512 aa).

Serine 65 carries O-linked (GlcNAc) serine glycosylation. Phenylalanine 222 lines the substrate pocket. Cysteine 454 contacts heme.

This sequence belongs to the cytochrome P450 family. In terms of assembly, interacts with PGRMC1; the interaction requires PGRMC1 homodimerization. It depends on heme as a cofactor. As to expression, constitutively expressed in liver.

It is found in the endoplasmic reticulum membrane. The protein resides in the microsome membrane. The catalysed reaction is an organic molecule + reduced [NADPH--hemoprotein reductase] + O2 = an alcohol + oxidized [NADPH--hemoprotein reductase] + H2O + H(+). The enzyme catalyses 17beta-estradiol + reduced [NADPH--hemoprotein reductase] + O2 = 2-hydroxy-17beta-estradiol + oxidized [NADPH--hemoprotein reductase] + H2O + H(+). It catalyses the reaction 17beta-estradiol + reduced [NADPH--hemoprotein reductase] + O2 = 4-hydroxy-17beta-estradiol + oxidized [NADPH--hemoprotein reductase] + H2O + H(+). It carries out the reaction estrone + reduced [NADPH--hemoprotein reductase] + O2 = 2-hydroxyestrone + oxidized [NADPH--hemoprotein reductase] + H2O + H(+). The catalysed reaction is estrone + reduced [NADPH--hemoprotein reductase] + O2 = 4-hydroxyestrone + oxidized [NADPH--hemoprotein reductase] + H2O + H(+). The enzyme catalyses cholesterol + reduced [NADPH--hemoprotein reductase] + O2 = 25-hydroxycholesterol + oxidized [NADPH--hemoprotein reductase] + H2O + H(+). It catalyses the reaction all-trans-retinol + reduced [NADPH--hemoprotein reductase] + O2 = all-trans-retinal + oxidized [NADPH--hemoprotein reductase] + 2 H2O + H(+). It carries out the reaction all-trans-retinal + reduced [NADPH--hemoprotein reductase] + O2 = all-trans-retinoate + oxidized [NADPH--hemoprotein reductase] + H2O + 2 H(+). The catalysed reaction is (5Z,8Z,11Z,14Z)-eicosatetraenoate + reduced [NADPH--hemoprotein reductase] + O2 = (14R,15S)-epoxy-(5Z,8Z,11Z)-eicosatrienoate + oxidized [NADPH--hemoprotein reductase] + H2O + H(+). The enzyme catalyses (5Z,8Z,11Z,14Z)-eicosatetraenoate + reduced [NADPH--hemoprotein reductase] + O2 = (14S,15R)-epoxy-(5Z,8Z,11Z)-eicosatrienoate + oxidized [NADPH--hemoprotein reductase] + H2O + H(+). It catalyses the reaction (5Z,8Z,11Z,14Z,17Z)-eicosapentaenoate + reduced [NADPH--hemoprotein reductase] + O2 = (17R,18S)-epoxy-(5Z,8Z,11Z,14Z)-eicosatetraenoate + oxidized [NADPH--hemoprotein reductase] + H2O + H(+). It carries out the reaction (4Z,7Z,10Z,13Z,16Z,19Z)-docosahexaenoate + reduced [NADPH--hemoprotein reductase] + O2 = (19R,20S)-epoxy-(4Z,7Z,10Z,13Z,16Z)-docosapentaenoate + oxidized [NADPH--hemoprotein reductase] + H2O + H(+). The catalysed reaction is (5S)-hydroperoxy-(6E,8Z,11Z,14Z)-eicosatetraenoate = 5-oxo-(6E,8Z,11Z,14Z)-eicosatetraenoate + H2O. The enzyme catalyses (12S)-hydroperoxy-(5Z,8Z,10E,14Z)-eicosatetraenoate = 12-oxo-(5Z,8Z,10E,14Z)-eicosatetraenoate + H2O. It catalyses the reaction (15S)-hydroperoxy-(5Z,8Z,11Z,13E)-eicosatetraenoate = 15-oxo-(5Z,8Z,11Z,13E)-eicosatetraenoate + H2O. It carries out the reaction (13S)-hydroperoxy-(9Z,11E)-octadecadienoate = 13-oxo-(9Z,11E)-octadecadienoate + H2O. The catalysed reaction is (5Z,8Z,11Z,14Z)-eicosatetraenoate + reduced [NADPH--hemoprotein reductase] + O2 = 13-hydroxy-(5Z,8Z,11Z,14Z)-eicosatetraenoate + oxidized [NADPH--hemoprotein reductase] + H2O + H(+). The enzyme catalyses (5Z,8Z,11Z,14Z)-eicosatetraenoate + reduced [NADPH--hemoprotein reductase] + O2 = 19-hydroxy-(5Z,8Z,11Z,14Z)-eicosatetraenoate + oxidized [NADPH--hemoprotein reductase] + H2O + H(+). It catalyses the reaction (9Z,12Z)-octadecadienoate + reduced [NADPH--hemoprotein reductase] + O2 = 11-hydroxy-(9Z,12Z)-octadecadienoate + oxidized [NADPH--hemoprotein reductase] + H2O + H(+). It functions in the pathway cofactor metabolism; retinol metabolism. Its pathway is steroid metabolism; cholesterol metabolism. It participates in lipid metabolism; arachidonate metabolism. A cytochrome P450 monooxygenase involved in the metabolism of various endogenous substrates, including fatty acids, steroid hormones and vitamins. Mechanistically, uses molecular oxygen inserting one oxygen atom into a substrate, and reducing the second into a water molecule, with two electrons provided by NADPH via cytochrome P450 reductase (NADPH--hemoprotein reductase). Catalyzes the hydroxylation of carbon-hydrogen bonds. Exhibits high catalytic activity for the formation of hydroxyestrogens from estrone (E1) and 17beta-estradiol (E2), namely 2-hydroxy E1 and E2. Metabolizes cholesterol toward 25-hydroxycholesterol, a physiological regulator of cellular cholesterol homeostasis. May act as a major enzyme for all-trans retinoic acid biosynthesis in the liver. Catalyzes two successive oxidative transformation of all-trans retinol to all-trans retinal and then to the active form all-trans retinoic acid. Primarily catalyzes stereoselective epoxidation of the last double bond of polyunsaturated fatty acids (PUFA), displaying a strong preference for the (R,S) stereoisomer. Catalyzes bisallylic hydroxylation and omega-1 hydroxylation of PUFA. May also participate in eicosanoids metabolism by converting hydroperoxide species into oxo metabolites (lipoxygenase-like reaction, NADPH-independent). Plays a role in the oxidative metabolism of xenobiotics. Catalyzes the N-hydroxylation of heterocyclic amines and the O-deethylation of phenacetin. Metabolizes caffeine via N3-demethylation. This Canis lupus familiaris (Dog) protein is Cytochrome P450 1A2 (CYP1A2).